The chain runs to 79 residues: Neurotoxin ShK-like1 (79 aa).

A signal peptide spans 1-25 (MSRKLLAVLMVCTFFLIAASMGTNA). The propeptide occupies 26-35 (LPFHEGIERR). The ShKT domain occupies 39–78 (CVDKMPFVCMRKDIPAICKNRNHRSYAFIMDVCRKTCGQC). 3 cysteine pairs are disulfide-bonded: Cys-39-Cys-78, Cys-47-Cys-71, and Cys-56-Cys-75.

As to expression, expressed in nematocytes (in planulae and primary polyps). Is localized predominantly in the body column nematocytes and not in the tentacles (in primary polyps).

The protein localises to the nematocyst. It localises to the secreted. Its function is as follows. Neurotoxin. In vivo, induces contraction paralysis followed by death (within 2 hours) on zebrafish larvae. Also induces body contraction in Nematostella 11-dpf polyps. The chain is Neurotoxin ShK-like1 from Nematostella vectensis (Starlet sea anemone).